Consider the following 262-residue polypeptide: ATP synthase subunit a (262 aa).

The next 5 membrane-spanning stretches (helical) occupy residues 26-46 (VHIDTLFFSILAAVIFLFVFS), 86-106 (VAPLALTIFCWVFIMNAIDLI), 130-150 (DISATLGMSICVFFLILFYTI), 204-226 (LIFILIAVMYSANMAIAALGIPL), and 240-260 (LQAFIFMMLTVVYLSIAYNKA).

Belongs to the ATPase A chain family. As to quaternary structure, F-type ATPases have 2 components, CF(1) - the catalytic core - and CF(0) - the membrane proton channel. CF(1) has five subunits: alpha(3), beta(3), gamma(1), delta(1), epsilon(1). CF(0) has three main subunits: a(1), b(2) and c(9-12). The alpha and beta chains form an alternating ring which encloses part of the gamma chain. CF(1) is attached to CF(0) by a central stalk formed by the gamma and epsilon chains, while a peripheral stalk is formed by the delta and b chains.

It is found in the cell inner membrane. Its function is as follows. Key component of the proton channel; it plays a direct role in the translocation of protons across the membrane. The protein is ATP synthase subunit a of Haemophilus influenzae (strain PittEE).